A 505-amino-acid polypeptide reads, in one-letter code: DDB1- and CUL4-associated factor 17 (505 aa).

The next 2 membrane-spanning stretches (helical) occupy residues 186-206 (VLLYLAVFRVLPFSLVGILEI) and 222-242 (GILIVMYSSGLVRLYSFQAII).

In terms of assembly, interacts with DDB1, CUL4A and CUL4B.

It is found in the membrane. Its subcellular location is the nucleus. It localises to the nucleolus. It participates in protein modification; protein ubiquitination. In terms of biological role, may function as a substrate receptor for CUL4-DDB1 E3 ubiquitin-protein ligase complex. The chain is DDB1- and CUL4-associated factor 17 (Dcaf17) from Rattus norvegicus (Rat).